The primary structure comprises 194 residues: Phosphoheptose isomerase (194 aa).

Positions 37–194 (ISNSFKQGGK…LIEFEMAKQA (158 aa)) constitute an SIS domain. Residue 52-54 (NGG) participates in substrate binding. Residues His61 and Glu65 each contribute to the Zn(2+) site. Substrate-binding positions include Glu65, 93-94 (ND), 119-121 (STS), Ser124, and Gln172. 2 residues coordinate Zn(2+): Gln172 and His180.

Belongs to the SIS family. GmhA subfamily. Homotetramer. Zn(2+) is required as a cofactor.

It is found in the cytoplasm. The catalysed reaction is 2 D-sedoheptulose 7-phosphate = D-glycero-alpha-D-manno-heptose 7-phosphate + D-glycero-beta-D-manno-heptose 7-phosphate. It participates in carbohydrate biosynthesis; D-glycero-D-manno-heptose 7-phosphate biosynthesis; D-glycero-alpha-D-manno-heptose 7-phosphate and D-glycero-beta-D-manno-heptose 7-phosphate from sedoheptulose 7-phosphate: step 1/1. Its pathway is bacterial outer membrane biogenesis; LOS core biosynthesis. Its function is as follows. Catalyzes the isomerization of sedoheptulose 7-phosphate in D-glycero-D-manno-heptose 7-phosphate. This chain is Phosphoheptose isomerase, found in Haemophilus influenzae (strain ATCC 51907 / DSM 11121 / KW20 / Rd).